We begin with the raw amino-acid sequence, 155 residues long: Probable tellurium resistance transcriptional regulator TerW (155 aa).

Functionally, involved in tellurite resistance. TerW binds specifically to the potential promoter region of the terZABCDE operon and probably regulates expression of the genes. The polypeptide is Probable tellurium resistance transcriptional regulator TerW (Escherichia coli).